We begin with the raw amino-acid sequence, 378 residues long: Cytochrome b (378 aa).

A run of 4 helical transmembrane segments spans residues 32-52, 76-97, 112-132, and 177-197; these read FGSL…FLAM, WLIR…FLHV, WNIG…GYVL, and FFAF…VHLL. 2 residues coordinate heme b: His-82 and His-96. Heme b is bound by residues His-181 and His-195. Residue His-200 participates in a ubiquinone binding. A run of 4 helical transmembrane segments spans residues 225-245, 287-307, 319-339, and 346-366; these read IKDA…VLFF, LGGV…PILH, LSQC…WIGG, and FITI…FALP.

This sequence belongs to the cytochrome b family. The cytochrome bc1 complex contains 11 subunits: 3 respiratory subunits (MT-CYB, CYC1 and UQCRFS1), 2 core proteins (UQCRC1 and UQCRC2) and 6 low-molecular weight proteins (UQCRH/QCR6, UQCRB/QCR7, UQCRQ/QCR8, UQCR10/QCR9, UQCR11/QCR10 and a cleavage product of UQCRFS1). This cytochrome bc1 complex then forms a dimer. The cofactor is heme b.

Its subcellular location is the mitochondrion inner membrane. In terms of biological role, component of the ubiquinol-cytochrome c reductase complex (complex III or cytochrome b-c1 complex) that is part of the mitochondrial respiratory chain. The b-c1 complex mediates electron transfer from ubiquinol to cytochrome c. Contributes to the generation of a proton gradient across the mitochondrial membrane that is then used for ATP synthesis. The chain is Cytochrome b (MT-CYB) from Sciurus aberti (Abert's squirrel).